We begin with the raw amino-acid sequence, 228 residues long: Glyceraldehyde 3-phosphate phosphatase (228 aa).

Belongs to the HAD-like hydrolase superfamily. The cofactor is Mg(2+).

In terms of biological role, catalyzes the dephosphorylation of D,L-glyceraldehyde 3-phosphate in vitro. The sequence is that of Glyceraldehyde 3-phosphate phosphatase from Methanocaldococcus jannaschii (strain ATCC 43067 / DSM 2661 / JAL-1 / JCM 10045 / NBRC 100440) (Methanococcus jannaschii).